The following is a 512-amino-acid chain: 2-isopropylmalate synthase (512 aa).

The Pyruvate carboxyltransferase domain maps to 5 to 268; the sequence is LIIFDTTLRD…DLGIATQHIL (264 aa). Mn(2+) contacts are provided by D14, H202, H204, and N239. The tract at residues 394–512 is regulatory domain; that stretch reads GFVSLFQQSE…NKADRVAAQG (119 aa).

The protein belongs to the alpha-IPM synthase/homocitrate synthase family. LeuA type 1 subfamily. As to quaternary structure, homodimer. The cofactor is Mn(2+).

Its subcellular location is the cytoplasm. The enzyme catalyses 3-methyl-2-oxobutanoate + acetyl-CoA + H2O = (2S)-2-isopropylmalate + CoA + H(+). It functions in the pathway amino-acid biosynthesis; L-leucine biosynthesis; L-leucine from 3-methyl-2-oxobutanoate: step 1/4. In terms of biological role, catalyzes the condensation of the acetyl group of acetyl-CoA with 3-methyl-2-oxobutanoate (2-ketoisovalerate) to form 3-carboxy-3-hydroxy-4-methylpentanoate (2-isopropylmalate). This Verminephrobacter eiseniae (strain EF01-2) protein is 2-isopropylmalate synthase.